Consider the following 201-residue polypeptide: MSAAARVLPKAVTFVTGNAKKLEEVRAILGSSVPFQSLKLDLPELQGEPEYISKEKARIAASQVNGPVLVEDTCLCFNALKGLPGPYIKWFLEKIGHEGLNNLLKAYEDKSAFAMCIFSLALGPGEEPITFVGKTAGKIVPARGPNYFGWDPVFQPDGFEQTYAEMPKSVKNNISHRGKALALVKEHFASASYTVQSNDST.

16–21 serves as a coordination point for ITP; that stretch reads TGNAKK. Glu-44 contributes to the Mg(2+) binding site. Residues Lys-56, 72-73, Lys-89, 148-151, Lys-171, and 176-177 each bind ITP; these read DT, FGWD, and HR.

Belongs to the HAM1 NTPase family. Homodimer. Requires Mg(2+) as cofactor. It depends on Mn(2+) as a cofactor.

It is found in the cytoplasm. It carries out the reaction ITP + H2O = IMP + diphosphate + H(+). It catalyses the reaction dITP + H2O = dIMP + diphosphate + H(+). The catalysed reaction is XTP + H2O = XMP + diphosphate + H(+). Its function is as follows. Pyrophosphatase that hydrolyzes non-canonical purine nucleotides such as inosine triphosphate (ITP), deoxyinosine triphosphate (dITP) or xanthosine 5'-triphosphate (XTP) to their respective monophosphate derivatives. The enzyme does not distinguish between the deoxy- and ribose forms. Probably excludes non-canonical purines from RNA and DNA precursor pools, thus preventing their incorporation into RNA and DNA and avoiding chromosomal lesions. The protein is Inosine triphosphate pyrophosphatase of Zea mays (Maize).